We begin with the raw amino-acid sequence, 568 residues long: Kinetochore protein NDC80 homolog (568 aa).

The segment at 1–59 (MRGGAAGKRRTTVGFGGAPPPPPPSIEQQRHLFNSRDSDASFASSRPSSIGLGGRGASD) is disordered. Residues 28-39 (QQRHLFNSRDSD) show a composition bias toward basic and acidic residues. Over residues 40 to 49 (ASFASSRPSS) the composition is skewed to low complexity. 2 coiled-coil regions span residues 241 to 334 (KESL…AEVA) and 433 to 469 (IESKRSLLGSIQLQINDLEEKMKLVKKETQELSTKCD).

Belongs to the NDC80/HEC1 family. Component of the NDC80 complex, which consists of NDC80, NUF2, SPC24 and SPC25.

Its subcellular location is the chromosome. The protein resides in the centromere. Functionally, acts as a component of the essential kinetochore-associated NDC80 complex, which is required for chromosome segregation and spindle checkpoint activity to ensure proper cell division. This chain is Kinetochore protein NDC80 homolog, found in Arabidopsis thaliana (Mouse-ear cress).